The chain runs to 503 residues: Zinc finger protein JACKDAW (503 aa).

Positions 32–51 (IPDLNPNSNPNPNAKPNSSS) are enriched in low complexity. Positions 32-68 (IPDLNPNSNPNPNAKPNSSSAKKKRNQPGTPDPDADV) are disordered. A Phosphoserine modification is found at serine 72. 2 consecutive C2H2-type zinc fingers follow at residues 82 to 104 (FVCE…RRGH) and 124 to 154 (YICP…SRKH). Short sequence motifs (nuclear localization signal) lie at residues 100-107 (HRRGHNLP) and 146-153 (IKKHYSRK). The C2H2-type 2; degenerate zinc-finger motif lies at 159 to 182 (WKCEKCSKKYAVQSDWKAHAKTCG). The Zn(2+) site is built by cysteine 161, cysteine 164, histidine 177, cysteine 181, cysteine 188, cysteine 190, histidine 203, and cysteine 207. Residues 186–209 (YKCDCGTLFSRKDSFITHRAFCDA) form a CCHC-type 2; atypical zinc finger. An SHR-binding region spans residues 196–208 (RKDSFITHRAFCD). Disordered regions lie at residues 301–417 (SSSS…SSPM) and 432–465 (RENH…LNPA). Residues 319-358 (TSTNPSLTLSSSSTSQQTSASLQHQTLKDSSFSPLFSSSS) show a composition bias toward low complexity. Positions 381 to 392 (MGSTRSNSSTAP) are enriched in polar residues. Residues 396–407 (AGPTMTSSSATA) show a composition bias toward low complexity. Positions 444-465 (GVSTSSVDNNPFQSNRSGLNPA) are enriched in polar residues.

Interacts with SHR, SCR, MGP and itself. The heterodimer with SHR involves its zinc fingers. Interacts with SIEL. Binds to RGA and SCL3 competitively in the nucleus. Expressed in the quiescent center, the ground tissue stem cells and to a lesser extent in mature cortex and endodermis cells.

It localises to the nucleus. Its function is as follows. Transcription factor that, together with BIB, regulates tissue boundaries and asymmetric cell division by a rapid up-regulation of 'SCARECROW' (SCR), thus controlling the nuclear localization of 'SHORT-ROOT' (SHR) and restricting its action. Binds DNA via its zinc fingers. Recognizes and binds to SCL3 promoter sequence 5'-AGACAA-3' to promote its expression when in complex with RGA. Confines CYCD6 expression to the cortex-endodermis initial/daughter (CEI/CEID) tissues. Required for radial patterning and stem cell maintenance. Counteracted by 'MAGPIE' (MGP). Binds to the SCR and MGP promoter sequences. Controls position-dependent signals that regulate epidermal-cell-type patterning. The protein is Zinc finger protein JACKDAW of Arabidopsis thaliana (Mouse-ear cress).